A 157-amino-acid polypeptide reads, in one-letter code: Epithelial membrane protein 1 (157 aa).

A helical membrane pass occupies residues 1-21 (MLVLLAGIFVVHIATVIMLFV). Asparagine 43 and asparagine 46 each carry an N-linked (GlcNAc...) asparagine glycan. 3 consecutive transmembrane segments (helical) span residues 67 to 87 (FMIL…FQLF), 95 to 115 (FFLS…GVSI), and 134 to 154 (YILG…YLVL).

It belongs to the PMP-22/EMP/MP20 family.

It localises to the membrane. The protein is Epithelial membrane protein 1 (EMP1) of Homo sapiens (Human).